We begin with the raw amino-acid sequence, 36 residues long: Ostricacin-1 (36 aa).

Intrachain disulfides connect Cys-3–Cys-29, Cys-8–Cys-23, and Cys-13–Cys-30.

The protein localises to the secreted. Functionally, has antibacterial activity against the Gram-positive bacteria S.aureus 1056 MRSA (MIC=1.25 ug/ml) and S.aureus NCTC 4163 (MIC=6.7 ug/ml), and the Gram-negative bacteria E.coli O157:H7 (MIC=0.96 ug/ml) and E.coli 0111 (MIC=6.7 ug/ml). Does not have antifungal activity against the yeast C.albicans 3153A. The chain is Ostricacin-1 from Struthio camelus (Common ostrich).